Reading from the N-terminus, the 84-residue chain is Small ribosomal subunit protein uS17 (84 aa).

The protein belongs to the universal ribosomal protein uS17 family. In terms of assembly, part of the 30S ribosomal subunit.

Functionally, one of the primary rRNA binding proteins, it binds specifically to the 5'-end of 16S ribosomal RNA. The polypeptide is Small ribosomal subunit protein uS17 (Thermoanaerobacter pseudethanolicus (strain ATCC 33223 / 39E) (Clostridium thermohydrosulfuricum)).